A 34-amino-acid polypeptide reads, in one-letter code: Photosystem II reaction center protein Psb30 (34 aa).

Residues 7–27 (VAQLISLFLILTSGPAIIVLI) form a helical membrane-spanning segment.

Belongs to the Psb30/Ycf12 family. PSII is composed of 1 copy each of membrane proteins PsbA, PsbB, PsbC, PsbD, PsbE, PsbF, PsbH, PsbI, PsbJ, PsbK, PsbL, PsbM, PsbT, PsbX, PsbY, PsbZ, Psb30/Ycf12, peripheral proteins of the oxygen-evolving complex and a large number of cofactors. It forms dimeric complexes.

The protein resides in the plastid. Its subcellular location is the chloroplast thylakoid membrane. In terms of biological role, a core subunit of photosystem II (PSII), probably helps stabilize the reaction center. This Rhodomonas salina (Cryptomonas salina) protein is Photosystem II reaction center protein Psb30.